The sequence spans 147 residues: Large ribosomal subunit protein uL16 (147 aa).

The protein belongs to the universal ribosomal protein uL16 family. As to quaternary structure, part of the 50S ribosomal subunit.

In terms of biological role, binds 23S rRNA and is also seen to make contacts with the A and possibly P site tRNAs. In Clostridium tetani (strain Massachusetts / E88), this protein is Large ribosomal subunit protein uL16.